Consider the following 309-residue polypeptide: Cysteinyl leukotriene receptor 2 (309 aa).

The Extracellular portion of the chain corresponds to 1–26; the sequence is MEVTGTPSSYSNRNCTIENFKKEFYP. A glycan (N-linked (GlcNAc...) asparagine) is linked at asparagine 14. The helical transmembrane segment at 27-47 threads the bilayer; sequence IIYLIIFFWGALGNGFSIYVF. Residues 48–56 are Cytoplasmic-facing; sequence LQTCKKSTS. A helical membrane pass occupies residues 57-77; the sequence is VNVFMLNLATSDFLFISTLPF. Residues 78 to 98 are Extracellular-facing; that stretch reads RADYYFRGSNWIFGDLACRVM. An intrachain disulfide couples cysteine 95 to cysteine 171. A helical transmembrane segment spans residues 99–119; that stretch reads SYSLYVNMYTSIYFLTVLSVV. The Cytoplasmic portion of the chain corresponds to 120-138; the sequence is RFLATVHPFRMFHVTSVRS. A helical membrane pass occupies residues 139–159; the sequence is AWILCGIIWVFIMASSALLLV. The Extracellular segment spans residues 160-187; that stretch reads NGQEEKDNIISCLELSPQKFKSLLIMNH. The chain crosses the membrane as a helical span at residues 188–208; sequence IAVAVGFLLPFLTLTVCYLLI. Topologically, residues 209-229 are cytoplasmic; it reads IRILLKAEIPESGPRAAHRKA. A helical membrane pass occupies residues 230-250; the sequence is LTTIVIAMITFLLCFLPYHAL. Residues 251-271 lie on the Extracellular side of the membrane; it reads RTLHLVTWDKDSCGDVLHKAT. A helical transmembrane segment spans residues 272–292; sequence VITLTMAAANSCFNPFLYYFA. Over 293–309 the chain is Cytoplasmic; sequence GENFKARLRAIFSKVHL.

Belongs to the G-protein coupled receptor 1 family. Widely expressed at low levels, with highest expression in the spleen, thymus and adrenal gland, and lower in the kidney, brain and peripheral blood leukocytes.

The protein resides in the cell membrane. Its function is as follows. Receptor for cysteinyl leukotrienes. The response is mediated via a G-protein that activates a phosphatidylinositol-calcium second messenger system. The rank order of affinities for the leukotrienes is LTC4 = LTD4 &gt;&gt; LTE4. The protein is Cysteinyl leukotriene receptor 2 (Cysltr2) of Mus musculus (Mouse).